The sequence spans 148 residues: Deoxyuridine 5'-triphosphate nucleotidohydrolase (148 aa).

Substrate-binding positions include 68–70, Asn-81, 85–87, and Lys-95; these read RSG and TID.

The protein belongs to the dUTPase family. It depends on Mg(2+) as a cofactor.

It catalyses the reaction dUTP + H2O = dUMP + diphosphate + H(+). It functions in the pathway pyrimidine metabolism; dUMP biosynthesis; dUMP from dCTP (dUTP route): step 2/2. In terms of biological role, this enzyme is involved in nucleotide metabolism: it produces dUMP, the immediate precursor of thymidine nucleotides and it decreases the intracellular concentration of dUTP so that uracil cannot be incorporated into DNA. The polypeptide is Deoxyuridine 5'-triphosphate nucleotidohydrolase (Rickettsia rickettsii (strain Iowa)).